A 165-amino-acid chain; its full sequence is MSHPALTQLRALRYFDAIPALEPHLLDWLLLEDSVTKRFEQQGKRVSVTLIREAFVGQSEVEEASGLLPSESRYWLREILLCADGEPWLAGRTVVPESTLCGPEQVLQHLGKTPLGRYLFTSSTLTRDFIEIGRDATLWGRRSRLRLSGKPLLLTELFLPASPLY.

Arginine 77, leucine 115, and glutamate 156 together coordinate substrate.

It belongs to the UbiC family. In terms of assembly, monomer.

The protein localises to the cytoplasm. The enzyme catalyses chorismate = 4-hydroxybenzoate + pyruvate. It functions in the pathway cofactor biosynthesis; ubiquinone biosynthesis. Removes the pyruvyl group from chorismate, with concomitant aromatization of the ring, to provide 4-hydroxybenzoate (4HB) for the ubiquinone pathway. The protein is Chorismate pyruvate-lyase of Salmonella typhi.